The chain runs to 323 residues: Methionine adenosyltransferase 2 subunit beta (323 aa).

NADP(+)-binding positions include threonine 26–leucine 29, tyrosine 49–arginine 51, asparagine 60–leucine 61, cysteine 82, arginine 86, tyrosine 146, and leucine 172. Residues leucine 308 to histidine 323 form a required for interaction with MAT2A region.

The protein belongs to the dTDP-4-dehydrorhamnose reductase family. MAT2B subfamily. In terms of assembly, heterotrimer; composed of a catalytic mat2a homodimer that binds one regulatory mat2b chain. Heterohexamer; composed of a central, catalytic mat2a homotetramer flanked on either side by a regulatory mat2b chain. NADP binding increases the affinity for mat2a.

It participates in amino-acid biosynthesis; S-adenosyl-L-methionine biosynthesis; S-adenosyl-L-methionine from L-methionine: step 1/1. Functionally, regulatory subunit of S-adenosylmethionine synthetase 2, an enzyme that catalyzes the formation of S-adenosylmethionine from methionine and ATP. Regulates MAT2A catalytic activity by changing its kinetic properties, increasing its affinity for L-methionine. Can bind NADP (in vitro). This chain is Methionine adenosyltransferase 2 subunit beta (mat2b), found in Danio rerio (Zebrafish).